The primary structure comprises 289 residues: Complement C1q tumor necrosis factor-related protein 7 (289 aa).

Positions 1–16 (MIVLLYVTSLAICASG) are cleaved as a signal peptide. The segment at 36 to 134 (IPGLPGPPGP…GDRGDQGDPG (99 aa)) is disordered. The region spanning 38-139 (GLPGPPGPPG…QGDPGLPGVC (102 aa)) is the Collagen-like domain. A compositionally biased stretch (low complexity) spans 48–61 (ANGSPGPHGRIGLP). Basic and acidic residues predominate over residues 63 to 76 (RDGRDGRKGEKGEK). A compositionally biased stretch (low complexity) spans 78 to 91 (TAGLKGKTGPLGLA). The span at 93–102 (EKGDQGETGK) shows a compositional bias: basic and acidic residues. Residues 143–279 (SIVLKSAFSV…GFLLYVDTDY (137 aa)) form the C1q domain.

The protein resides in the secreted. In Mus musculus (Mouse), this protein is Complement C1q tumor necrosis factor-related protein 7 (C1qtnf7).